The primary structure comprises 247 residues: Probable dihydroorotate dehydrogenase B (NAD(+)), electron transfer subunit (247 aa).

One can recognise an FAD-binding FR-type domain in the interval 1–87 (MLRRVTLKET…RGPYGNGFKE (87 aa)). [2Fe-2S] cluster contacts are provided by Cys-200, Cys-205, Cys-208, and Cys-216.

This sequence belongs to the PyrK family. In terms of assembly, heterotetramer of 2 PyrK and 2 PyrD type B subunits. The cofactor is [2Fe-2S] cluster. FAD serves as cofactor.

Its pathway is pyrimidine metabolism; UMP biosynthesis via de novo pathway; orotate from (S)-dihydroorotate (NAD(+) route): step 1/1. In terms of biological role, responsible for channeling the electrons from the oxidation of dihydroorotate from the FMN redox center in the PyrD type B subunit to the ultimate electron acceptor NAD(+). This chain is Probable dihydroorotate dehydrogenase B (NAD(+)), electron transfer subunit, found in Pyrococcus horikoshii (strain ATCC 700860 / DSM 12428 / JCM 9974 / NBRC 100139 / OT-3).